A 30-amino-acid polypeptide reads, in one-letter code: GIPCGESCVWIPCISAAIGCSCKNKVCYRN.

A cross-link (cyclopeptide (Gly-Asn)) is located at residues 1–30; it reads GIPCGESCVWIPCISAAIGCSCKNKVCYRN. 3 cysteine pairs are disulfide-bonded: cysteine 4–cysteine 20, cysteine 8–cysteine 22, and cysteine 13–cysteine 27.

In terms of processing, this is a cyclic peptide.

In terms of biological role, probably participates in a plant defense mechanism. The protein is Cyclotide cycloviolacin O17 of Psychotria brachyceras.